Here is a 124-residue protein sequence, read N- to C-terminus: Small ribosomal subunit protein uS12 (124 aa).

The disordered stretch occupies residues 1-25 (MPTFNQLVRNGRKPPRWKTSSPALE). Asp89 is modified (3-methylthioaspartic acid). A disordered region spans residues 104–124 (TAGVANRKQSRSKYGAKRPKS). Positions 111 to 124 (KQSRSKYGAKRPKS) are enriched in basic residues.

Belongs to the universal ribosomal protein uS12 family. Part of the 30S ribosomal subunit. Contacts proteins S8 and S17. May interact with IF1 in the 30S initiation complex.

Its function is as follows. With S4 and S5 plays an important role in translational accuracy. In terms of biological role, interacts with and stabilizes bases of the 16S rRNA that are involved in tRNA selection in the A site and with the mRNA backbone. Located at the interface of the 30S and 50S subunits, it traverses the body of the 30S subunit contacting proteins on the other side and probably holding the rRNA structure together. The combined cluster of proteins S8, S12 and S17 appears to hold together the shoulder and platform of the 30S subunit. This chain is Small ribosomal subunit protein uS12, found in Solibacter usitatus (strain Ellin6076).